The following is a 180-amino-acid chain: Type-1 fimbrial protein subunit (180 aa).

The N-terminal stretch at 1-22 (MKKVLLPLAALVLSATASNAMA) is a signal peptide. Residues cysteine 38 and cysteine 78 are joined by a disulfide bond.

Belongs to the fimbrial protein family.

It is found in the fimbrium. Its function is as follows. Fimbriae (also called pili), polar filaments radiating from the surface of the bacterium to a length of 0.5-1.5 micrometers and numbering 100-300 per cell, enable bacteria to colonize the epithelium of specific host organs. The polypeptide is Type-1 fimbrial protein subunit (fimA) (Serratia marcescens).